The following is a 127-amino-acid chain: Lysozyme C (127 aa).

The 127-residue stretch at 1 to 127 (KDIPRCELVK…KDLSSYVRGC (127 aa)) folds into the C-type lysozyme domain. Intrachain disulfides connect Cys6-Cys127, Cys30-Cys115, Cys64-Cys80, and Cys76-Cys94. Active-site residues include Glu35 and Asp52. Lys82, Asp85, Asn87, Asp90, and Asp91 together coordinate Ca(2+).

Belongs to the glycosyl hydrolase 22 family. Monomer. Requires Ca(2+) as cofactor.

Its subcellular location is the secreted. The enzyme catalyses Hydrolysis of (1-&gt;4)-beta-linkages between N-acetylmuramic acid and N-acetyl-D-glucosamine residues in a peptidoglycan and between N-acetyl-D-glucosamine residues in chitodextrins.. Functionally, lysozymes have primarily a bacteriolytic function; those in tissues and body fluids are associated with the monocyte-macrophage system and enhance the activity of immunoagents. This Columba livia (Rock dove) protein is Lysozyme C (LYZ).